A 496-amino-acid polypeptide reads, in one-letter code: Cobyric acid synthase (496 aa).

A GATase cobBQ-type domain is found at 256-444 (KINIAVVLLR…IHGILDNQAF (189 aa)). C337 (nucleophile) is an active-site residue. Residue H436 is part of the active site.

This sequence belongs to the CobB/CobQ family. CobQ subfamily.

It functions in the pathway cofactor biosynthesis; adenosylcobalamin biosynthesis. In terms of biological role, catalyzes amidations at positions B, D, E, and G on adenosylcobyrinic A,C-diamide. NH(2) groups are provided by glutamine, and one molecule of ATP is hydrogenolyzed for each amidation. This is Cobyric acid synthase from Phocaeicola vulgatus (strain ATCC 8482 / DSM 1447 / JCM 5826 / CCUG 4940 / NBRC 14291 / NCTC 11154) (Bacteroides vulgatus).